Here is a 79-residue protein sequence, read N- to C-terminus: NADH-ubiquinone oxidoreductase chain 5 (79 aa).

Transmembrane regions (helical) follow at residues 5-27 (TPIM…TNPY) and 40-57 (VMYA…FILS).

This sequence belongs to the complex I subunit 5 family. As to quaternary structure, core subunit of respiratory chain NADH dehydrogenase (Complex I) which is composed of 45 different subunits.

The protein resides in the mitochondrion inner membrane. The enzyme catalyses a ubiquinone + NADH + 5 H(+)(in) = a ubiquinol + NAD(+) + 4 H(+)(out). Functionally, core subunit of the mitochondrial membrane respiratory chain NADH dehydrogenase (Complex I) which catalyzes electron transfer from NADH through the respiratory chain, using ubiquinone as an electron acceptor. Essential for the catalytic activity and assembly of complex I. This is NADH-ubiquinone oxidoreductase chain 5 (MT-ND5) from Macaca fascicularis (Crab-eating macaque).